A 109-amino-acid chain; its full sequence is Putative double-stranded DNA mimic protein plu2488 (109 aa).

It belongs to the putative dsDNA mimic protein family.

May act as a double-stranded DNA (dsDNA) mimic. Probably regulates the activity of a dsDNA-binding protein. In Photorhabdus laumondii subsp. laumondii (strain DSM 15139 / CIP 105565 / TT01) (Photorhabdus luminescens subsp. laumondii), this protein is Putative double-stranded DNA mimic protein plu2488.